Here is a 1216-residue protein sequence, read N- to C-terminus: Protein WWC3 (1216 aa).

Residues 1–63 (MPWLSGGRRR…RESAELPLPA (63 aa)) form a disordered region. The span at 21 to 51 (EPPPSAQPQREPPPAPPAAVPTPPAPSAPPP) shows a compositional bias: pro residues. WW domains follow at residues 59–92 (LPLP…DPRD) and 106–139 (DELP…DPRE). 2 coiled-coil regions span residues 164-250 (KEIY…TLQE) and 354-468 (DRVR…EATR). Disordered stretches follow at residues 487 to 508 (VSSG…SSRG), 546 to 612 (GRDA…ADSC), and 634 to 668 (DLPG…VGGT). Residues 570–598 (PQSLASLSSRSSLSSLSPPSSPLDTPFLP) are compositionally biased toward low complexity. The C2 domain occupies 722 to 847 (SNGDPQIHVG…SLSEMQLRWH (126 aa)). The stretch at 885–936 (DAVTVLLARTTAQLQAVERELAEERAKLEYTEEEVLEMERKEEQAEAISERS) forms a coiled coil. Residues 1060–1079 (SPFVRNTLERRTLRYKQSCR) form an interaction with PRKCZ region. Residues 1091 to 1160 (LDLELDLQAS…RQTRQTKLDY (70 aa)) adopt a coiled-coil conformation.

The protein belongs to the WWC family. Forms homodimers and heterodimers with WWC1 and WWC2. Interacts with DLC1 and PRKCZ. Interacts (via WW domains) with LATS1 and LATS2.

The protein resides in the cytoplasm. It localises to the cytosol. Its function is as follows. Regulator of the Hippo signaling pathway, also known as the Salvador-Warts-Hippo (SWH) pathway. Enhances phosphorylation of LATS1 and YAP1 and negatively regulates cell proliferation and organ growth due to a suppression of the transcriptional activity of YAP1, the major effector of the Hippo pathway. This chain is Protein WWC3, found in Homo sapiens (Human).